A 265-amino-acid chain; its full sequence is GTP cyclohydrolase FolE2 (265 aa).

It belongs to the GTP cyclohydrolase IV family.

It carries out the reaction GTP + H2O = 7,8-dihydroneopterin 3'-triphosphate + formate + H(+). It participates in cofactor biosynthesis; 7,8-dihydroneopterin triphosphate biosynthesis; 7,8-dihydroneopterin triphosphate from GTP: step 1/1. Converts GTP to 7,8-dihydroneopterin triphosphate. This is GTP cyclohydrolase FolE2 from Magnetococcus marinus (strain ATCC BAA-1437 / JCM 17883 / MC-1).